A 259-amino-acid chain; its full sequence is Phosphatidylglycerol--prolipoprotein diacylglyceryl transferase (259 aa).

The next 4 helical transmembrane spans lie at 9–29, 47–67, 83–103, and 109–129; these read IGPF…VLAV, IDFI…YYVI, IWNG…VLFI, and VLNP…AQAI. Arg131 contributes to the a 1,2-diacyl-sn-glycero-3-phospho-(1'-sn-glycerol) binding site. Helical transmembrane passes span 167-187, 194-214, and 227-247; these read MPTF…ICYL, LLEG…RFVI, and LRVS…FVIL.

It belongs to the Lgt family.

The protein localises to the cell membrane. It carries out the reaction L-cysteinyl-[prolipoprotein] + a 1,2-diacyl-sn-glycero-3-phospho-(1'-sn-glycerol) = an S-1,2-diacyl-sn-glyceryl-L-cysteinyl-[prolipoprotein] + sn-glycerol 1-phosphate + H(+). It functions in the pathway protein modification; lipoprotein biosynthesis (diacylglyceryl transfer). In terms of biological role, catalyzes the transfer of the diacylglyceryl group from phosphatidylglycerol to the sulfhydryl group of the N-terminal cysteine of a prolipoprotein, the first step in the formation of mature lipoproteins. The chain is Phosphatidylglycerol--prolipoprotein diacylglyceryl transferase from Streptococcus uberis (strain ATCC BAA-854 / 0140J).